The following is an 806-amino-acid chain: Ribonucleoside-diphosphate reductase large subunit-like protein (806 aa).

It belongs to the ribonucleoside diphosphate reductase large chain family.

It is found in the virion. It localises to the host cytoplasm. Does not possess a ribonucleotide reductase activity. Betaherpesviruses probably use another strategy to expand the dNTP pool in a quiescent host cell. The chain is Ribonucleoside-diphosphate reductase large subunit-like protein from Human herpesvirus 7 (strain JI) (HHV-7).